Consider the following 381-residue polypeptide: Alkanesulfonate monooxygenase (381 aa).

It belongs to the SsuD family. Homotetramer.

It carries out the reaction an alkanesulfonate + FMNH2 + O2 = an aldehyde + FMN + sulfite + H2O + 2 H(+). In terms of biological role, catalyzes the desulfonation of aliphatic sulfonates. This chain is Alkanesulfonate monooxygenase, found in Cronobacter sakazakii (strain ATCC BAA-894) (Enterobacter sakazakii).